We begin with the raw amino-acid sequence, 395 residues long: Octopamine receptor beta-2R (395 aa).

Topologically, residues 1 to 42 (MDPINGSHSGANATISDITNGAYNATDAGEWTSSVMFKLRTC) are extracellular. 3 N-linked (GlcNAc...) asparagine glycosylation sites follow: asparagine 5, asparagine 12, and asparagine 24. Residues 43 to 63 (VLLLIVIMAVLGNMLVIVSVM) form a helical membrane-spanning segment. The Cytoplasmic segment spans residues 64–74 (RHRKLRVITNY). Residues 75–95 (FVVSLAFADILVAMVVMPFNF) traverse the membrane as a helical segment. Topologically, residues 96-117 (SVQFNQGWVFGETICDLWNSSD) are extracellular. An N-linked (GlcNAc...) asparagine glycan is attached at asparagine 114. Residues 118-140 (VYFTSTSILHLCCISVDRYYAIV) traverse the membrane as a helical segment. Topologically, residues 141 to 154 (KPLKYPIKMTKKMA) are cytoplasmic. A helical transmembrane segment spans residues 155–175 (FVMLAATWLSPITISYVPIFM). Residues 176-202 (GWYTTTDFLESRRDDQCEFKVNKPYAV) are Extracellular-facing. A helical transmembrane segment spans residues 203–223 (ISSSISFWIPCTIMIFTYLAI). At 224 to 282 (FKEANRQEKALHARAGNAMLMHRHSREVSDKNGALHINATTPTKDRNLLKMKREHKAAR) the chain is on the cytoplasmic side. A helical membrane pass occupies residues 283–303 (TLGIIMGAFILCWLPFFLYYV). Residues 304–315 (STSLCDSCNCPE) lie on the Extracellular side of the membrane. The chain crosses the membrane as a helical span at residues 316 to 336 (VVTVIMFWTGYFNSALNPIIY). The Cytoplasmic segment spans residues 337–395 (AYFNRDFRNAFKNTLACAFCSFCKRSASDLDAMERLDRRGSAQLRVPIPSRRASDLASL).

It belongs to the G-protein coupled receptor 1 family.

The protein localises to the cell membrane. In terms of biological role, autoreceptor for octopamine, which is a neurotransmitter, neurohormone, and neuromodulator in invertebrates. Also acts as a receptor for tyramine, but with much less potency. The activity of this receptor is mediated by G proteins which activate adenylyl cyclase. This Chilo suppressalis (Asiatic rice borer moth) protein is Octopamine receptor beta-2R.